The following is a 418-amino-acid chain: Hydroxysteroid dehydrogenase-like protein 2 (418 aa).

NADP(+) is bound by residues 17-23 (GASRGIG), K42, and D74. K42 carries the N6-(2-hydroxyisobutyryl)lysine modification. At K116 the chain carries N6-acetyllysine. The active-site Proton acceptor is the Y168. NADP(+) is bound at residue K172. The SCP2 domain occupies 306–415 (RSGAVEETFR…KLEKLMNQMN (110 aa)). An N6-succinyllysine modification is found at K318.

This sequence belongs to the short-chain dehydrogenases/reductases (SDR) family. As to expression, ubiquitous.

It is found in the peroxisome. The protein localises to the mitochondrion. Has apparently no steroid dehydrogenase activity. Controls bile acid (BA) and lipid metabolism in response to nutritional cues. The protein is Hydroxysteroid dehydrogenase-like protein 2 of Homo sapiens (Human).